The following is a 1761-amino-acid chain: Lysine-specific demethylase 3B (1761 aa).

Residue Ala2 is modified to N-acetylalanine. The tract at residues Asp253–Phe346 is disordered. The segment covering Ala298 to Val309 has biased composition (basic and acidic residues). N6-acetyllysine is present on Lys361. Disordered regions lie at residues Gln370 to Leu394 and Asp438 to Leu496. 3 stretches are compositionally biased toward polar residues: residues Ala380–Thr392, Ser453–Ala468, and Pro477–Val495. Residues Ser492, Ser546, Ser556, and Ser560 each carry the phosphoserine modification. The tract at residues Arg572 to Pro603 is disordered. Thr614 is subject to Phosphothreonine. Positions Gly714–Leu762 are disordered. Over residues Gly723–Pro745 the composition is skewed to polar residues. Phosphoserine occurs at positions 766, 773, 778, and 779. Lys788 is covalently cross-linked (Glycyl lysine isopeptide (Lys-Gly) (interchain with G-Cter in SUMO2)). At Ser798 the chain carries Phosphoserine. The interval Ala805–Gln827 is disordered. The C6-type zinc-finger motif lies at Cys1031–Cys1056. Residues Gly1142–Phe1161 show a composition bias toward polar residues. Residues Gly1142–Ser1220 form a disordered region. A compositionally biased stretch (basic and acidic residues) spans Glu1174–Lys1193. Residues Thr1194–Glu1204 show a composition bias toward polar residues. Ser1253 and Ser1259 each carry phosphoserine. An LXXLL motif motif is present at residues Leu1293–Leu1297. The JmjC domain occupies Met1498 to Arg1721. Fe cation contacts are provided by His1560, Asp1562, and His1689.

The protein belongs to the JHDM2 histone demethylase family. Fe(2+) serves as cofactor. Ubiquitous. Highly expressed in placenta, skeletal muscle, kidney, heart and liver.

The protein resides in the nucleus. It carries out the reaction N(6),N(6)-dimethyl-L-lysyl(9)-[histone H3] + 2 2-oxoglutarate + 2 O2 = L-lysyl(9)-[histone H3] + 2 formaldehyde + 2 succinate + 2 CO2. Functionally, histone demethylase that specifically demethylates 'Lys-9' of histone H3, thereby playing a central role in histone code. Demethylation of Lys residue generates formaldehyde and succinate. May have tumor suppressor activity. The polypeptide is Lysine-specific demethylase 3B (KDM3B) (Homo sapiens (Human)).